The sequence spans 221 residues: Proteasome subunit beta type-1 (221 aa).

This sequence belongs to the peptidase T1B family. As to quaternary structure, the 26S proteasome consists of a 20S proteasome core and two 19S regulatory subunits. The 20S proteasome core is composed of 28 subunits that are arranged in four stacked rings, resulting in a barrel-shaped structure. The two end rings are each formed by seven alpha subunits, and the two central rings are each formed by seven beta subunits. The catalytic chamber with the active sites is on the inside of the barrel.

The protein localises to the cytoplasm. It is found in the nucleus. Functionally, non-catalytic component of the proteasome, a multicatalytic proteinase complex which is characterized by its ability to cleave peptides with Arg, Phe, Tyr, Leu, and Glu adjacent to the leaving group at neutral or slightly basic pH. The proteasome has an ATP-dependent proteolytic activity. The chain is Proteasome subunit beta type-1 (PBF1) from Oryza sativa subsp. japonica (Rice).